We begin with the raw amino-acid sequence, 370 residues long: CCA-adding enzyme (370 aa).

Positions 8 and 11 each coordinate ATP. Residues Gly8 and Arg11 each contribute to the CTP site. Residues Asp21 and Asp23 each coordinate Mg(2+). Residues Arg91, Arg137, and Arg140 each coordinate ATP. CTP-binding residues include Arg91, Arg137, and Arg140.

It belongs to the tRNA nucleotidyltransferase/poly(A) polymerase family. Bacterial CCA-adding enzyme type 2 subfamily. The cofactor is Mg(2+).

The enzyme catalyses a tRNA precursor + 2 CTP + ATP = a tRNA with a 3' CCA end + 3 diphosphate. It catalyses the reaction a tRNA with a 3' CCA end + 2 CTP + ATP = a tRNA with a 3' CCACCA end + 3 diphosphate. In terms of biological role, catalyzes the addition and repair of the essential 3'-terminal CCA sequence in tRNAs without using a nucleic acid template. Adds these three nucleotides in the order of C, C, and A to the tRNA nucleotide-73, using CTP and ATP as substrates and producing inorganic pyrophosphate. tRNA 3'-terminal CCA addition is required both for tRNA processing and repair. Also involved in tRNA surveillance by mediating tandem CCA addition to generate a CCACCA at the 3' terminus of unstable tRNAs. While stable tRNAs receive only 3'-terminal CCA, unstable tRNAs are marked with CCACCA and rapidly degraded. In Pseudomonas putida (strain W619), this protein is CCA-adding enzyme.